A 123-amino-acid chain; its full sequence is Small ribosomal subunit protein uS12 (123 aa).

Asp-89 bears the 3-methylthioaspartic acid mark.

This sequence belongs to the universal ribosomal protein uS12 family. As to quaternary structure, part of the 30S ribosomal subunit. Contacts proteins S8 and S17. May interact with IF1 in the 30S initiation complex.

With S4 and S5 plays an important role in translational accuracy. Functionally, interacts with and stabilizes bases of the 16S rRNA that are involved in tRNA selection in the A site and with the mRNA backbone. Located at the interface of the 30S and 50S subunits, it traverses the body of the 30S subunit contacting proteins on the other side and probably holding the rRNA structure together. The combined cluster of proteins S8, S12 and S17 appears to hold together the shoulder and platform of the 30S subunit. This chain is Small ribosomal subunit protein uS12, found in Methylobacterium nodulans (strain LMG 21967 / CNCM I-2342 / ORS 2060).